The primary structure comprises 665 residues: UvrABC system protein B (665 aa).

Residues 25–176 (NSIEKGNRFQ…NQRQLLRDLV (152 aa)) form the Helicase ATP-binding domain. ATP is bound at residue 38-45 (GATGTGKT). Positions 91–114 (YYDYYQPEAYIPVSDTYIEKSASI) match the Beta-hairpin motif. Residues 429–595 (QVDDLLGEIK…PIVTRSSNAI (167 aa)) form the Helicase C-terminal domain. The UVR domain maps to 626-661 (PELIGQLEEQMKEAAKKLEFEEAAKYRDRIQHLRDK).

This sequence belongs to the UvrB family. As to quaternary structure, forms a heterotetramer with UvrA during the search for lesions. Interacts with UvrC in an incision complex.

It is found in the cytoplasm. In terms of biological role, the UvrABC repair system catalyzes the recognition and processing of DNA lesions. A damage recognition complex composed of 2 UvrA and 2 UvrB subunits scans DNA for abnormalities. Upon binding of the UvrA(2)B(2) complex to a putative damaged site, the DNA wraps around one UvrB monomer. DNA wrap is dependent on ATP binding by UvrB and probably causes local melting of the DNA helix, facilitating insertion of UvrB beta-hairpin between the DNA strands. Then UvrB probes one DNA strand for the presence of a lesion. If a lesion is found the UvrA subunits dissociate and the UvrB-DNA preincision complex is formed. This complex is subsequently bound by UvrC and the second UvrB is released. If no lesion is found, the DNA wraps around the other UvrB subunit that will check the other stand for damage. The protein is UvrABC system protein B of Gloeothece citriformis (strain PCC 7424) (Cyanothece sp. (strain PCC 7424)).